The primary structure comprises 176 residues: Skp1-related protein (176 aa).

This sequence belongs to the SKP1 family. As to quaternary structure, probable component of the SCF(sel-10) E3 ubiquitin-protein ligase complex containing F-box domain-containing protein sel-10 as the substrate recognition component. Interacts with cul-1. May interact with the F-box protein mec-15. Interacts with dre-1. Interacts with syg-1. Interacts with sel-10. Ubiquitously expressed in the adult.

Functionally, probable essential component of SCF (SKP1-CUL1-F-box protein) E3 ubiquitin-protein ligase complexes, which mediate the ubiquitination and subsequent proteasomal degradation of target proteins. Regulates cell proliferation during embryonic and larval development. Involved in synapse elimination in early synapse development. May negatively regulate the apoptotic activity of cep-1 in response to genotoxic stress. Plays a role in sex determination. The protein is Skp1-related protein of Caenorhabditis elegans.